The following is a 108-amino-acid chain: UPF0102 protein Tpet_0671 (108 aa).

It belongs to the UPF0102 family.

In Thermotoga petrophila (strain ATCC BAA-488 / DSM 13995 / JCM 10881 / RKU-1), this protein is UPF0102 protein Tpet_0671.